A 285-amino-acid polypeptide reads, in one-letter code: Bifunctional protein FolD (285 aa).

Residues 165–167 (GRS), Ser190, and Ile231 contribute to the NADP(+) site.

Belongs to the tetrahydrofolate dehydrogenase/cyclohydrolase family. In terms of assembly, homodimer.

It catalyses the reaction (6R)-5,10-methylene-5,6,7,8-tetrahydrofolate + NADP(+) = (6R)-5,10-methenyltetrahydrofolate + NADPH. The catalysed reaction is (6R)-5,10-methenyltetrahydrofolate + H2O = (6R)-10-formyltetrahydrofolate + H(+). It functions in the pathway one-carbon metabolism; tetrahydrofolate interconversion. Catalyzes the oxidation of 5,10-methylenetetrahydrofolate to 5,10-methenyltetrahydrofolate and then the hydrolysis of 5,10-methenyltetrahydrofolate to 10-formyltetrahydrofolate. This is Bifunctional protein FolD from Magnetococcus marinus (strain ATCC BAA-1437 / JCM 17883 / MC-1).